The primary structure comprises 275 residues: Thioredoxin-like 1-1, chloroplastic (275 aa).

The transit peptide at 1 to 72 (MTEVISKTSL…GDSQDESFRR (72 aa)) directs the protein to the chloroplast. Residues 73-206 (SSAITAQTTL…FRDALAKHGP (134 aa)) form the Thioredoxin domain. Catalysis depends on nucleophile residues cysteine 129 and cysteine 132. Cysteine 129 and cysteine 132 are oxidised to a cystine. The segment at 238 to 275 (KPVPVEKEAATPDSNPSLPVPLPSMSSNDEKTLVSAGR) is disordered. Residues 249-264 (PDSNPSLPVPLPSMSS) are compositionally biased toward low complexity.

This sequence belongs to the thioredoxin family.

It is found in the plastid. The protein resides in the chloroplast. In terms of biological role, thiol-disulfide oxidoreductase that may participate in various redox reactions. Possesses insulin disulfide bonds reducing activity. In Arabidopsis thaliana (Mouse-ear cress), this protein is Thioredoxin-like 1-1, chloroplastic.